The chain runs to 196 residues: Type-4 uracil-DNA glycosylase (196 aa).

[4Fe-4S] cluster contacts are provided by C13 and C16. Uracil is bound by residues 40 to 42 (GEA), F54, and N80. Positions 84 and 100 each coordinate [4Fe-4S] cluster. Uracil is bound at residue H162.

Belongs to the uracil-DNA glycosylase (UDG) superfamily. Type 4 (UDGa) family.

The catalysed reaction is Hydrolyzes single-stranded DNA or mismatched double-stranded DNA and polynucleotides, releasing free uracil.. Removes uracil bases that are present in DNA as a result of either deamination of cytosine or misincorporation of dUMP instead of dTMP. Can remove uracil from double-stranded DNA containing either a U/G or U/A base pair as well as from single-stranded DNA. This is Type-4 uracil-DNA glycosylase from Pyrobaculum aerophilum (strain ATCC 51768 / DSM 7523 / JCM 9630 / CIP 104966 / NBRC 100827 / IM2).